The sequence spans 568 residues: MPHVVARSGDVMSSAAPPSCTSLLGLSLSMFVAPCTLTAAPLDTPVVNAPAPTPPTPDQAYPELFQAVQSGELFDDQKHFVDFLPLRDPALINADYLAQHDHPGFDLRKFVDANFEESPPVQTDAIRQDTALREHIDLLWPKLVRSQNHVPPYSSLLSLPHPYVVPGGRFREVYYWDSYFTMLGLVKSGQTTLSRQMLDNFAYLIDTYGHIPNGNRSYYLSRSQPPFFSYMVELQAGVEGQAVYQRYLPQLQKEYAYWMQGSDDVQPGQAARHVVRLADGSVLNRYWDERDTPRPEAWLHDTRTAAEVKDRPAAEVYRDLRAGAESGWDYTSRWLADGQNLRTIRTTAIIPIDLNSLLYHLERTLAQACAQPGAACSRDYAALAQQRKQAIDAHLWNKAGYYADYDWQTRTLSDQITAAALYPLFAGLASDDHAKRTASTVRRTLVRPGGLATTAVKTGQQWDEPNGWAPLQWVAVDGLRRYGEQALARTIGERFLAQVQALFAREHKLVEKYGLETNAAGGGGGEYALQDGFGWTNGVTLMLLNLYPGKGAKAAPAKRVRKTEAAAR.

The N-terminal stretch at 1 to 39 is a signal peptide; sequence MPHVVARSGDVMSSAAPPSCTSLLGLSLSMFVAPCTLTA. Residues Arg-169, 176 to 177, Asn-213, 222 to 224, 294 to 296, and Gly-327 contribute to the substrate site; these read WD, RSQ, and RPE. Active-site proton donor/acceptor residues include Asp-329 and Glu-511. Position 526 (Glu-526) interacts with substrate.

Belongs to the glycosyl hydrolase 37 family.

The protein resides in the periplasm. The catalysed reaction is alpha,alpha-trehalose + H2O = alpha-D-glucose + beta-D-glucose. Functionally, provides the cells with the ability to utilize trehalose at high osmolarity by splitting it into glucose molecules that can subsequently be taken up by the phosphotransferase-mediated uptake system. This is Periplasmic trehalase from Xanthomonas oryzae pv. oryzae (strain MAFF 311018).